We begin with the raw amino-acid sequence, 63 residues long: Conotoxin Vi5.1a (63 aa).

An N-terminal signal peptide occupies residues 1-22 (MRCVPVFIILLLLIPSAPSADA). The propeptide occupies 23–50 (QPKTKDDVPLASYHDNAERTLQRLWNQR). Position 62 is a proline amide (proline 62).

It belongs to the conotoxin T superfamily. Post-translationally, contains 2 disulfide bonds that can be either 'C1-C3, C2-C4' or 'C1-C4, C2-C3', since these disulfide connectivities have been observed for conotoxins with cysteine framework V (for examples, see AC P0DQQ7 and AC P81755). As to expression, expressed by the venom duct.

It is found in the secreted. The polypeptide is Conotoxin Vi5.1a (Conus virgo (Virgin cone)).